Consider the following 62-residue polypeptide: Small ribosomal subunit protein eS27 (62 aa).

Residues C17, C20, C36, and C39 each coordinate Zn(2+). Residues 17–39 (CPDCENEQVVFERASTVVECTVC) form a C4-type zinc finger.

Belongs to the eukaryotic ribosomal protein eS27 family. As to quaternary structure, part of the 30S ribosomal subunit. The cofactor is Zn(2+).

The chain is Small ribosomal subunit protein eS27 from Methanoculleus marisnigri (strain ATCC 35101 / DSM 1498 / JR1).